The primary structure comprises 128 residues: Fluoride-specific ion channel FluC (128 aa).

The next 4 helical transmembrane spans lie at 10–30 (FLAVAIGAALGACARWLAGLW), 40–60 (TLLVNLAGGYLIGLALAVLLA), 71–91 (AAVTGFLGGLTTFSTFSAETV), and 102–122 (ALGYAALSLVGSLALTALGLA). Residues G78 and T81 each coordinate Na(+).

The protein belongs to the fluoride channel Fluc/FEX (TC 1.A.43) family.

Its subcellular location is the cell inner membrane. The enzyme catalyses fluoride(in) = fluoride(out). Its activity is regulated as follows. Na(+) is not transported, but it plays an essential structural role and its presence is essential for fluoride channel function. Fluoride-specific ion channel. Important for reducing fluoride concentration in the cell, thus reducing its toxicity. The chain is Fluoride-specific ion channel FluC from Bordetella petrii (strain ATCC BAA-461 / DSM 12804 / CCUG 43448).